Reading from the N-terminus, the 246-residue chain is Peroxisomal membrane protein 11A (246 aa).

Topologically, residues 1 to 93 are cytoplasmic; it reads MDAFIRVANQ…LCLTLANLNR (93 aa). A helical membrane pass occupies residues 94–114; that stretch reads VVYYICDTVLWAKSVGLTSGI. At 115–217 the chain is on the lumenal side; it reads NREKWQMRAA…LNQLGIYKSN (103 aa). A helical membrane pass occupies residues 218–238; it reads LGVVGFGGLVSSVAGLITVVY. The segment at 218–238 is required for homodimerization, interaction with PEX11G, and peroxisomal localization; sequence LGVVGFGGLVSSVAGLITVVY. At 239–246 the chain is on the cytoplasmic side; that stretch reads PQLKLKAR.

This sequence belongs to the peroxin-11 family. Homodimer. Heterodimer with PEX11G. Probably interacts with COPB2 and COPA. Interacts with PEX19. Interacts with FIS1. As to expression, expressed at high levels in kidney, liver, lung, brain, and testis and at low levels in heart, spleen and skeletal muscle.

It localises to the peroxisome membrane. Its function is as follows. May be involved in peroxisomal proliferation and may regulate peroxisomes division. May mediate binding of coatomer proteins to the peroxisomal membrane. Promotes membrane protrusion and elongation on the peroxisomal surface. In Rattus norvegicus (Rat), this protein is Peroxisomal membrane protein 11A (Pex11a).